Consider the following 390-residue polypeptide: Chorismate synthase (390 aa).

2 residues coordinate NADP(+): Arg48 and Arg54. FMN is bound by residues 125 to 127 (RSS), 238 to 239 (NA), Gly278, 293 to 297 (KPTSS), and Arg319. The interval 359-390 (PRIPGSTTNQIHPVEMQASAPRAEDPEPDESS) is disordered.

It belongs to the chorismate synthase family. Homotetramer. FMNH2 is required as a cofactor.

The enzyme catalyses 5-O-(1-carboxyvinyl)-3-phosphoshikimate = chorismate + phosphate. It participates in metabolic intermediate biosynthesis; chorismate biosynthesis; chorismate from D-erythrose 4-phosphate and phosphoenolpyruvate: step 7/7. Catalyzes the anti-1,4-elimination of the C-3 phosphate and the C-6 proR hydrogen from 5-enolpyruvylshikimate-3-phosphate (EPSP) to yield chorismate, which is the branch point compound that serves as the starting substrate for the three terminal pathways of aromatic amino acid biosynthesis. This reaction introduces a second double bond into the aromatic ring system. In Nitrosomonas europaea (strain ATCC 19718 / CIP 103999 / KCTC 2705 / NBRC 14298), this protein is Chorismate synthase.